The chain runs to 102 residues: Acylphosphatase 1 (102 aa).

Residues 12 to 100 (TRLVRVRGRV…PRFDRFEQLP (89 aa)) enclose the Acylphosphatase-like domain. Active-site residues include Arg-27 and Asn-45.

Belongs to the acylphosphatase family.

The catalysed reaction is an acyl phosphate + H2O = a carboxylate + phosphate + H(+). The polypeptide is Acylphosphatase 1 (acyP1) (Ralstonia nicotianae (strain ATCC BAA-1114 / GMI1000) (Ralstonia solanacearum)).